A 269-amino-acid polypeptide reads, in one-letter code: 5'-nucleotidase SurE (269 aa).

A divalent metal cation-binding residues include aspartate 11, aspartate 12, serine 43, and asparagine 101.

Belongs to the SurE nucleotidase family. It depends on a divalent metal cation as a cofactor.

Its subcellular location is the cytoplasm. The catalysed reaction is a ribonucleoside 5'-phosphate + H2O = a ribonucleoside + phosphate. Its function is as follows. Nucleotidase that shows phosphatase activity on nucleoside 5'-monophosphates. The polypeptide is 5'-nucleotidase SurE (Prochlorococcus marinus (strain MIT 9211)).